The chain runs to 101 residues: Small ribosomal subunit protein uS14A (101 aa).

The interval 29 to 60 (EIIRSPRSTPEQRTAAQNELAHQPRDASAVRV) is disordered. The segment covering 34–45 (PRSTPEQRTAAQ) has biased composition (polar residues).

Belongs to the universal ribosomal protein uS14 family. As to quaternary structure, part of the 30S ribosomal subunit. Contacts proteins S3 and S10.

Functionally, binds 16S rRNA, required for the assembly of 30S particles and may also be responsible for determining the conformation of the 16S rRNA at the A site. This is Small ribosomal subunit protein uS14A from Mycolicibacterium paratuberculosis (strain ATCC BAA-968 / K-10) (Mycobacterium paratuberculosis).